Consider the following 352-residue polypeptide: DNA integrity scanning protein DisA (352 aa).

The 141-residue stretch at 3–143 (DERIVLALKS…FKYSLSEVSV (141 aa)) folds into the DAC domain. ATP is bound by residues G70, L88, and 101 to 105 (IRHRT).

This sequence belongs to the DisA family. Homooctamer. Requires Mg(2+) as cofactor.

The catalysed reaction is 2 ATP = 3',3'-c-di-AMP + 2 diphosphate. Functionally, participates in a DNA-damage check-point that is active prior to asymmetric division when DNA is damaged. DisA forms globular foci that rapidly scan along the chromosomes during sporulation, searching for lesions. When a lesion is present, DisA pauses at the lesion site. This triggers a cellular response that culminates in a temporary block in sporulation initiation. Also has diadenylate cyclase activity, catalyzing the condensation of 2 ATP molecules into cyclic di-AMP (c-di-AMP). c-di-AMP acts as a signaling molecule that couples DNA integrity with progression of sporulation. The rise in c-di-AMP level generated by DisA while scanning the chromosome, operates as a positive signal that advances sporulation; upon encountering a lesion, the DisA focus arrests at the damaged site and halts c-di-AMP synthesis. This Carboxydothermus hydrogenoformans (strain ATCC BAA-161 / DSM 6008 / Z-2901) protein is DNA integrity scanning protein DisA.